A 506-amino-acid polypeptide reads, in one-letter code: Glutamate--tRNA ligase (506 aa).

The short motif at 21 to 31 is the 'HIGH' region element; that stretch reads PSPTGTPHVGM. The 'KMSKS' region motif lies at 265 to 269; it reads KLSKR. Lys268 is an ATP binding site.

This sequence belongs to the class-I aminoacyl-tRNA synthetase family. Glutamate--tRNA ligase type 1 subfamily. As to quaternary structure, monomer.

It localises to the cytoplasm. The enzyme catalyses tRNA(Glu) + L-glutamate + ATP = L-glutamyl-tRNA(Glu) + AMP + diphosphate. Its function is as follows. Catalyzes the attachment of glutamate to tRNA(Glu) in a two-step reaction: glutamate is first activated by ATP to form Glu-AMP and then transferred to the acceptor end of tRNA(Glu). This is Glutamate--tRNA ligase from Bifidobacterium longum (strain DJO10A).